A 70-amino-acid polypeptide reads, in one-letter code: Large ribosomal subunit protein bL31 (70 aa).

Zn(2+)-binding residues include Cys16, Cys18, Cys37, and Cys40.

The protein belongs to the bacterial ribosomal protein bL31 family. Type A subfamily. Part of the 50S ribosomal subunit. Requires Zn(2+) as cofactor.

Its function is as follows. Binds the 23S rRNA. This is Large ribosomal subunit protein bL31 from Shewanella frigidimarina (strain NCIMB 400).